The sequence spans 621 residues: Kelch-like protein 40 (621 aa).

The BTB domain occupies 33 to 98; sequence LDCVVRAGER…LYTSEIALDE (66 aa). The 107-residue stretch at 133 to 239 folds into the BACK domain; that stretch reads CLAVFRLGLL…PRAFLESRVE (107 aa). The tract at residues 265–295 is disordered; it reads ITTLRKKKKGKDGAGAKEADKGTSKAKAEED. Positions 275–292 are enriched in basic and acidic residues; that stretch reads KDGAGAKEADKGTSKAKA. Kelch repeat units follow at residues 360 to 412, 413 to 462, 463 to 510, 512 to 557, and 559 to 613; these read QVFV…EALN, SIYV…SHMD, LVYV…VHDG, IIVA…SLVG, and LYAI…PVRL.

Belongs to the KLHL40 family. In terms of assembly, component of the BCR(KLHL40) E3 ubiquitin ligase complex, at least composed of CUL3, KLHL40 and RBX1. Interacts with LMOD3. As to expression, highly expressed in fetal (19, 23 and 31 weeks of gestation) and adult skeletal muscle; expression levels tend to be higher in fetal compared to postnatal muscles (at protein level). Also expressed in fetal and adult heart.

The protein localises to the cytoplasm. Its subcellular location is the myofibril. The protein resides in the sarcomere. It localises to the a band. It is found in the i band. In terms of biological role, substrate-specific adapter of a BCR (BTB-CUL3-RBX1) E3 ubiquitin ligase complex that acts as a key regulator of skeletal muscle development. The BCR(KLHL40) complex acts by mediating ubiquitination and degradation of TFDP1, thereby regulating the activity of the E2F:DP transcription factor complex. Promotes stabilization of LMOD3 by acting as a negative regulator of LMOD3 ubiquitination; the molecular process by which it negatively regulates ubiquitination of LMOD3 is however unclear. This is Kelch-like protein 40 from Homo sapiens (Human).